A 632-amino-acid polypeptide reads, in one-letter code: Polygalacturonase non-catalytic subunit AroGP3 (632 aa).

The first 27 residues, 1–27 (MHTKILLPSCILLLLLFTLSSLDVVVA), serve as a signal peptide directing secretion. Positions 28–109 (KDGDESGNPF…MCALDLLPSL (82 aa)) are excised as a propeptide. N-linked (GlcNAc...) asparagine glycosylation is found at N125, N143, N258, N280, N336, N371, and N389. Residues 417–631 (FFREKMLKSG…FENDMTWATA (215 aa)) form the BURP domain.

In terms of assembly, interacts with polygalacturonase to form heterodimers.

The protein localises to the secreted. Its subcellular location is the extracellular space. It localises to the apoplast. It is found in the cell wall. Functionally, non-catalytic subunit of polygalacturonase. The polypeptide is Polygalacturonase non-catalytic subunit AroGP3 (GP3) (Solanum lycopersicum (Tomato)).